A 141-amino-acid chain; its full sequence is Nucleoside diphosphate kinase (141 aa).

6 residues coordinate ATP: Lys-11, Phe-59, Arg-87, Thr-93, Arg-104, and Asn-114. His-117 serves as the catalytic Pros-phosphohistidine intermediate.

This sequence belongs to the NDK family. In terms of assembly, homotetramer. Requires Mg(2+) as cofactor.

It localises to the cytoplasm. The catalysed reaction is a 2'-deoxyribonucleoside 5'-diphosphate + ATP = a 2'-deoxyribonucleoside 5'-triphosphate + ADP. It catalyses the reaction a ribonucleoside 5'-diphosphate + ATP = a ribonucleoside 5'-triphosphate + ADP. Major role in the synthesis of nucleoside triphosphates other than ATP. The ATP gamma phosphate is transferred to the NDP beta phosphate via a ping-pong mechanism, using a phosphorylated active-site intermediate. The sequence is that of Nucleoside diphosphate kinase from Pseudomonas fluorescens (strain ATCC BAA-477 / NRRL B-23932 / Pf-5).